Here is a 434-residue protein sequence, read N- to C-terminus: Serine hydroxymethyltransferase (434 aa).

(6S)-5,6,7,8-tetrahydrofolate contacts are provided by residues Leu-132 and Gly-136 to Leu-138. An N6-(pyridoxal phosphate)lysine modification is found at Lys-241.

This sequence belongs to the SHMT family. In terms of assembly, homodimer. Pyridoxal 5'-phosphate serves as cofactor.

The protein localises to the cytoplasm. The enzyme catalyses (6R)-5,10-methylene-5,6,7,8-tetrahydrofolate + glycine + H2O = (6S)-5,6,7,8-tetrahydrofolate + L-serine. It participates in one-carbon metabolism; tetrahydrofolate interconversion. The protein operates within amino-acid biosynthesis; glycine biosynthesis; glycine from L-serine: step 1/1. In terms of biological role, catalyzes the reversible interconversion of serine and glycine with tetrahydrofolate (THF) serving as the one-carbon carrier. This reaction serves as the major source of one-carbon groups required for the biosynthesis of purines, thymidylate, methionine, and other important biomolecules. Also exhibits THF-independent aldolase activity toward beta-hydroxyamino acids, producing glycine and aldehydes, via a retro-aldol mechanism. The protein is Serine hydroxymethyltransferase of Nitrobacter hamburgensis (strain DSM 10229 / NCIMB 13809 / X14).